The sequence spans 127 residues: Large ribosomal subunit protein bL20 (127 aa).

It belongs to the bacterial ribosomal protein bL20 family.

In terms of biological role, binds directly to 23S ribosomal RNA and is necessary for the in vitro assembly process of the 50S ribosomal subunit. It is not involved in the protein synthesizing functions of that subunit. The sequence is that of Large ribosomal subunit protein bL20 from Akkermansia muciniphila (strain ATCC BAA-835 / DSM 22959 / JCM 33894 / BCRC 81048 / CCUG 64013 / CIP 107961 / Muc).